The primary structure comprises 114 residues: Gene 37 protein (114 aa).

This Mycobacterium (Mycobacteriophage L5) protein is Gene 37 protein (37).